Reading from the N-terminus, the 184-residue chain is Lysozyme 1 (184 aa).

The N-terminal stretch at Met-1 to Gly-20 is a signal peptide. Residues Thr-69 to Asn-184 enclose the I-type lysozyme domain. 6 disulfide bridges follow: Cys-76–Cys-152, Cys-81–Cys-87, Cys-92–Cys-101, Cys-114–Cys-134, Cys-124–Cys-130, and Cys-148–Cys-166. Residue Glu-84 is the Proton donor of the active site. Asp-95 (nucleophile) is an active-site residue. Lys-107–Asp-113 lines the substrate pocket. Substrate contacts are provided by residues Tyr-138 and His-159–Gly-161.

As to expression, hemolymph, labial palps, non-vesiculated cells of mantle connective tissue, cells of interlamellar junctions and epithelia surrounding the water tubes of the gills.

The protein localises to the secreted. It catalyses the reaction Hydrolysis of (1-&gt;4)-beta-linkages between N-acetylmuramic acid and N-acetyl-D-glucosamine residues in a peptidoglycan and between N-acetyl-D-glucosamine residues in chitodextrins.. Functionally, has antibacterial activity against the Gram-positive bacteria L.garvieae, M.luteus and Enterococcus sp., and the Gram-negative bacteria E.coli and V.vulnificus. Weak antibacterial activity against the Gram-negative bacterium A.hydrophila. No antibacterial activity detected against the Gram-positive bacterium S.iniae or against the Gram-negative bacterium E.ictaluri. Shows some chitinase activity but no isopeptidase activity. The sequence is that of Lysozyme 1 from Crassostrea virginica (Eastern oyster).